Here is a 130-residue protein sequence, read N- to C-terminus: Cytochrome c-type biogenesis protein CcmE (130 aa).

The Cytoplasmic portion of the chain corresponds to 1 to 7; that stretch reads MKKKHKR. Residues 8–28 form a helical; Signal-anchor for type II membrane protein membrane-spanning segment; that stretch reads LLITSGIFCFLSCAVFFILTT. The Extracellular segment spans residues 29–130; sequence LKENISFFYT…DENYKPKVLK (102 aa). Heme-binding residues include H120 and Y124.

This sequence belongs to the CcmE/CycJ family.

The protein resides in the cell membrane. Functionally, heme chaperone required for the biogenesis of c-type cytochromes. Transiently binds heme delivered by CcmC and transfers the heme to apo-cytochromes in a process facilitated by CcmF and CcmH. The polypeptide is Cytochrome c-type biogenesis protein CcmE (Wolbachia pipientis subsp. Culex pipiens (strain wPip)).